Here is a 394-residue protein sequence, read N- to C-terminus: Acetate kinase (394 aa).

N10 serves as a coordination point for Mg(2+). K17 contacts ATP. A substrate-binding site is contributed by R87. The Proton donor/acceptor role is filled by D144. ATP contacts are provided by residues 204–208 (HLGNG), 279–281 (DMR), and 327–331 (GIGEN). Position 381 (E381) interacts with Mg(2+).

Belongs to the acetokinase family. As to quaternary structure, homodimer. It depends on Mg(2+) as a cofactor. Requires Mn(2+) as cofactor.

The protein resides in the cytoplasm. It carries out the reaction acetate + ATP = acetyl phosphate + ADP. It participates in metabolic intermediate biosynthesis; acetyl-CoA biosynthesis; acetyl-CoA from acetate: step 1/2. Catalyzes the formation of acetyl phosphate from acetate and ATP. Can also catalyze the reverse reaction. In Ectopseudomonas mendocina (strain ymp) (Pseudomonas mendocina), this protein is Acetate kinase.